The primary structure comprises 298 residues: GTP cyclohydrolase FolE2 (298 aa).

Belongs to the GTP cyclohydrolase IV family.

The catalysed reaction is GTP + H2O = 7,8-dihydroneopterin 3'-triphosphate + formate + H(+). Its pathway is cofactor biosynthesis; 7,8-dihydroneopterin triphosphate biosynthesis; 7,8-dihydroneopterin triphosphate from GTP: step 1/1. Functionally, converts GTP to 7,8-dihydroneopterin triphosphate. This is GTP cyclohydrolase FolE2 from Neisseria meningitidis serogroup B (strain ATCC BAA-335 / MC58).